Reading from the N-terminus, the 244-residue chain is MRAEDVVRAPSTPLDAPAFPAGPYRFTDREYLNITYRTDPEALRRVVPEPLRVAEPLVRFEVMRMPDVTGLGDYTEAGQLAVVEYEGEPGEYGISIHVDNFPAIASGREIGAFPKKAGRPRLYVDQDTLVGTLDHGTLPVARATMGYKHRPLNTEQAREELTRPTFMLKKLPHYDGSPRICELVRTQIADIVVKGAWSGPARLQLFAHALAPLADLPVLEVVSAAHVLTDLTLGRARVVHDYLA.

Residue K115 is the Schiff-base intermediate with acetoacetate of the active site.

This sequence belongs to the ADC family.

It catalyses the reaction acetoacetate + H(+) = acetone + CO2. In terms of biological role, catalyzes the conversion of acetoacetate to acetone and carbon dioxide. This chain is Acetoacetate decarboxylase, found in Streptomyces nogalater.